A 173-amino-acid polypeptide reads, in one-letter code: Nascent polypeptide-associated complex subunit alpha (173 aa).

In terms of domain architecture, NAC-A/B spans 21-85 (VVHAEKAQKL…VTVEDMAAQA (65 aa)). A disordered region spans residues 89-117 (NESQKQATETKEEAAITEESGDAQPADTA). Ser122 carries the phosphoserine modification. A UBA domain is found at 134–171 (VDAKDIELVMAQANVSRAKAVTALKENNSDVVNAIMSL).

It belongs to the NAC-alpha family. Part of the nascent polypeptide-associated complex (NAC), consisting of ucp15 and btf3. NAC associates with ribosomes via btf3.

The protein resides in the cytoplasm. Its subcellular location is the nucleus. Component of the nascent polypeptide-associated complex (NAC), a dynamic component of the ribosomal exit tunnel, protecting the emerging polypeptides from interaction with other cytoplasmic proteins to ensure appropriate nascent protein targeting. The NAC complex also promotes mitochondrial protein import by enhancing productive ribosome interactions with the outer mitochondrial membrane and blocks the inappropriate interaction of ribosomes translating non-secretory nascent polypeptides with translocation sites in the membrane of the endoplasmic reticulum. Ucp15 may also be involved in transcription regulation. The polypeptide is Nascent polypeptide-associated complex subunit alpha (egd2) (Schizosaccharomyces pombe (strain 972 / ATCC 24843) (Fission yeast)).